The following is a 310-amino-acid chain: Isoflavone reductase homolog A622-like (310 aa).

Residues 13–19 (GGTGYIG), Arg38, and Lys47 each bind NADP(+). Lys135 serves as the catalytic Proton acceptor. Residue Arg139 coordinates NADP(+).

This sequence belongs to the NmrA-type oxidoreductase family. Isoflavone reductase subfamily. In terms of assembly, monomer. As to expression, expressed in roots.

Its subcellular location is the cytoplasm. Its pathway is alkaloid biosynthesis; nicotine biosynthesis. Functionally, involved in the biosynthesis of pyridine alkaloid natural products, leading mainly to the production of anabasine, anatabine, nicotine and nornicotine, effective deterrents against herbivores with antiparasitic and pesticide properties (neurotoxins); nornicotine serves as the precursor in the synthesis of the carcinogen compound N'-nitrosonornicotine (NNN). Reductase that may be involved in a late step of tobacco alkaloid biosynthesis. Maybe involved in either the formation of a nicotinic acid-derived precursor or the final condensation reaction of tobacco alkaloids. This chain is Isoflavone reductase homolog A622-like, found in Nicotiana tabacum (Common tobacco).